Consider the following 1044-residue polypeptide: Elongation factor 3B (1044 aa).

Position 2 is an N-acetylserine (Ser-2). One copy of the HEAT 1 repeat lies at 5 to 42 (QQSITVLEELFRKLETATSETREGISSELSSFLNGNII). The ADP site is built by Ile-42, His-44, and Ser-83. HEAT repeat units lie at residues 86–123 (PYIVATVPSVCSKAGSKDNDVQLAATKALKAIASAVNP), 124–162 (VAVKALLPHLIHSLETSNKWKEKVAVLEVISVLVDAAKE), 166–203 (LRMPELIPVLSESMWDTKKGVKEAATTTITKATETVDN), 205–241 (DIERFIPKLIECIANPNEVPETVHLLGATTFVAEVTP), 242–279 (ATLSIMVPLLSRGLAERETSIKRKAAVIIDNMCKLVED), and 285–323 (PFLGKLLPGLKNNFATIADPEAREVTLKALKTLRRVGNV). Lys-187 and Lys-196 each carry N6,N6,N6-trimethyllysine. ADP-binding residues include Thr-392, His-396, and Glu-397. 2 ABC transporter domains span residues 426 to 641 (DEGE…YYEL) and 667 to 993 (VKVS…KKEE). Asn-703 contributes to the ADP binding site. N6,N6,N6-trimethyllysine is present on Lys-789. Residues Glu-922, Asn-925, and His-951 each contribute to the ADP site. At Thr-972 the chain carries Phosphothreonine. Ser-974 is modified (phosphoserine). The segment at 975 to 1044 (GHNWVAGQGA…DEYVSSDEDF (70 aa)) is disordered. Positions 987-999 (RIEKKEEEGDKFD) are enriched in basic and acidic residues. The segment covering 1020–1031 (RKKKKERMKKKK) has biased composition (basic residues). Phosphoserine occurs at positions 1039 and 1040.

The protein belongs to the ABC transporter superfamily. ABCF family. EF3 subfamily. As to quaternary structure, monomer.

The protein resides in the cytoplasm. It carries out the reaction ATP + H2O = ADP + phosphate + H(+). It participates in protein biosynthesis; polypeptide chain elongation. Its function is as follows. Ribosome-dependent ATPase that promotes the translation of proteins required for detoxification of reactive oxygen species. Required for the ATP-dependent release of deacylated tRNA from the ribosomal E-site during protein biosynthesis. Stimulates the eEF1A-dependent binding of aminoacyl-tRNA to the ribosomal A-site, which has reduced affinity for tRNA as long as the E-site is occupied. Assists translation termination by stimulating the release of nascent protein from the ribosome by release factors. The sequence is that of Elongation factor 3B from Saccharomyces cerevisiae (strain ATCC 204508 / S288c) (Baker's yeast).